The sequence spans 248 residues: Ribonuclease PH (248 aa).

Residues Arg86 and 124–126 (GTR) each bind phosphate.

Belongs to the RNase PH family. Homohexameric ring arranged as a trimer of dimers.

It catalyses the reaction tRNA(n+1) + phosphate = tRNA(n) + a ribonucleoside 5'-diphosphate. Functionally, phosphorolytic 3'-5' exoribonuclease that plays an important role in tRNA 3'-end maturation. Removes nucleotide residues following the 3'-CCA terminus of tRNAs; can also add nucleotides to the ends of RNA molecules by using nucleoside diphosphates as substrates, but this may not be physiologically important. Probably plays a role in initiation of 16S rRNA degradation (leading to ribosome degradation) during starvation. This chain is Ribonuclease PH, found in Listeria innocua serovar 6a (strain ATCC BAA-680 / CLIP 11262).